The primary structure comprises 441 residues: UBX domain-containing protein 6 (441 aa).

The interval 1–10 is mediates interaction with LMAN1; it reads MKKFFQEFKA. Lysine 2 carries the N-acetylalanine modification. Disordered regions lie at residues 13–79 and 87–106; these read KFKS…QDTI and LQAE…NVVS. Residues 22–36 show a composition bias toward basic and acidic residues; sequence KLKESVGEKAHKEKP. The VCP/p97-interacting motif (VIM) stretch occupies residues 51 to 63; sequence EAQMAAAAALARL. The segment covering 52–61 has biased composition (low complexity); it reads AQMAAAAALA. Serine 96 bears the Phosphoserine mark. Residues 175–244 form the PUB domain; the sequence is VDTIAKYLDN…DPEEFYVLSE (70 aa). The UBX domain occupies 332 to 408; it reads RKYNYTLLRV…GLVPSALLTF (77 aa).

Interacts with VCP through the PUB domain (via C-terminus) and VIM motif (via N-terminus); the interaction is direct. Forms a ternary complex with CAV1 and VCP. Interacts with SYVN1. Interacts with HERPUD1. Interacts with VCPKMT. May interact with DERL1. Interacts with PLAA, VCP and YOD1; may form a complex involved in macroautophagy. Interacts with LMAN1. As to expression, enhanced expression in testis.

It is found in the cytoplasm. Its subcellular location is the cytosol. The protein localises to the membrane. The protein resides in the nucleus. It localises to the cytoskeleton. It is found in the microtubule organizing center. Its subcellular location is the centrosome. The protein localises to the early endosome membrane. The protein resides in the late endosome membrane. It localises to the lysosome membrane. May negatively regulate the ATPase activity of VCP, an ATP-driven segregase that associates with different cofactors to control a wide variety of cellular processes. As a cofactor of VCP, it may play a role in the transport of CAV1 to lysosomes for degradation. It may also play a role in endoplasmic reticulum-associated degradation (ERAD) of misfolded proteins. Together with VCP and other cofactors, it may play a role in macroautophagy, regulating for instance the clearance of damaged lysosomes. The protein is UBX domain-containing protein 6 of Homo sapiens (Human).